The sequence spans 1526 residues: uncharacterized protein (1526 aa).

WD repeat units lie at residues 334–376, 862–901, 904–945, 946–985, 988–1027, 1030–1069, 1072–1111, 1114–1153, 1156–1195, 1198–1237, 1240–1279, 1282–1321, 1324–1363, 1366–1405, 1408–1447, and 1450–1491; these read CTKE…EHIS, KILG…ELLT, GHNS…KTFK, GHTS…CLYI, GHTG…CFYI, GHTS…CLYT, GYTS…CLYT, GHTN…CLYI, GHTS…CLCT, GHTS…CLHT, GHTN…CLHT, GHTN…CLYT, GHNN…CLYT, and GHIN…KTLK. One can recognise a Pentapeptide repeat domain in the interval 823-862; that stretch reads MVLEGRDLSHTVIIGADFTNTSLRCVNFTEANLAYSVFTK.

This is an uncharacterized protein from Nostoc sp. (strain PCC 7120 / SAG 25.82 / UTEX 2576).